The chain runs to 360 residues: Nicotinate-nucleotide--dimethylbenzimidazole phosphoribosyltransferase (360 aa).

E327 functions as the Proton acceptor in the catalytic mechanism.

Belongs to the CobT family.

It catalyses the reaction 5,6-dimethylbenzimidazole + nicotinate beta-D-ribonucleotide = alpha-ribazole 5'-phosphate + nicotinate + H(+). The protein operates within nucleoside biosynthesis; alpha-ribazole biosynthesis; alpha-ribazole from 5,6-dimethylbenzimidazole: step 1/2. Its function is as follows. Catalyzes the synthesis of alpha-ribazole-5'-phosphate from nicotinate mononucleotide (NAMN) and 5,6-dimethylbenzimidazole (DMB). The polypeptide is Nicotinate-nucleotide--dimethylbenzimidazole phosphoribosyltransferase (Shewanella baltica (strain OS185)).